Here is a 382-residue protein sequence, read N- to C-terminus: 6-oxocyclohex-1-ene-1-carbonyl-CoA hydrolase (382 aa).

The protein belongs to the enoyl-CoA hydratase/isomerase family. As to quaternary structure, homohexamer.

The enzyme catalyses 6-oxocyclohex-1-ene-1-carbonyl-CoA + 2 H2O = 3-hydroxy-6-carboxyhexanoyl-CoA + H(+). The protein operates within aromatic compound metabolism; benzoyl-CoA degradation. Functionally, involved in the central benzoyl-CoA catabolism. Catalyzes the addition of one molecule of water to the double bond and the hydrolytic cleavage of C-C bond in the alicyclic ring, 6-oxocyclohex-1-ene-1-carbonyl-CoA (6-OCH-CoA) to yield 3-hydroxypimelyl-CoA. This chain is 6-oxocyclohex-1-ene-1-carbonyl-CoA hydrolase, found in Syntrophus aciditrophicus (strain SB).